Consider the following 512-residue polypeptide: Cytokinin hydroxylase (512 aa).

A helical transmembrane segment spans residues 2 to 22 (MVTLVLKYVLVIVMTLILRVL). Heme is bound at residue Cys-458.

This sequence belongs to the cytochrome P450 family. The cofactor is heme. As to expression, specifically expressed in roots.

The protein localises to the membrane. It catalyses the reaction N(6)-(dimethylallyl)adenosine 5'-phosphate + NADPH + O2 + H(+) = 9-ribosyl-trans-zeatin 5'-phosphate + NADP(+) + H2O. The catalysed reaction is N(6)-(dimethylallyl)adenosine 5'-diphosphate + NADPH + O2 + H(+) = 9-ribosyl-trans-zeatin 5'-diphosphate + NADP(+) + H2O. It carries out the reaction N(6)-(dimethylallyl)adenosine 5'-triphosphate + NADPH + O2 + H(+) = 9-ribosyl-trans-zeatin 5'-triphosphate + NADP(+) + H2O. Functionally, cytokinin hydroxylase that catalyzes the biosynthesis of trans-zeatin via the isopentenyladenine riboside 5'-monophosphate (iPRMP)-dependent pathway. Can use isopentenyladenosine-5'-monophosphate, isopentenyladenosine-5'-diphosphate and isopentenyladenosine-5'-triphosphate as substrate. The sequence is that of Cytokinin hydroxylase (CYP735A2) from Arabidopsis thaliana (Mouse-ear cress).